An 84-amino-acid chain; its full sequence is Large ribosomal subunit protein bL27 (84 aa).

It belongs to the bacterial ribosomal protein bL27 family.

In Buchnera aphidicola subsp. Schizaphis graminum (strain Sg), this protein is Large ribosomal subunit protein bL27.